The primary structure comprises 155 residues: MADPEKQGPAESRAEDEVMEGAQGGEDAATGDSATAPAAEEPQAPAENAPKPKNDFIESLPNPVKCRVLALKKLQKRCDKIEAKFDKEFQALEKKYNDIYKPLLAKIQELTGEMEGCAWTLEGEDDEDDEEEEDEEEEEEEAAAGATGGPDSAEK.

Residues 1-16 (MADPEKQGPAESRAED) show a composition bias toward basic and acidic residues. A disordered region spans residues 1–60 (MADPEKQGPAESRAEDEVMEGAQGGEDAATGDSATAPAAEEPQAPAENAPKPKNDFIESL). Over residues 27–49 (DAATGDSATAPAAEEPQAPAENA) the composition is skewed to low complexity. Residues 68-94 (VLALKKLQKRCDKIEAKFDKEFQALEK) adopt a coiled-coil conformation. Residues 119-155 (WTLEGEDDEDDEEEEDEEEEEEEAAAGATGGPDSAEK) form a disordered region. The span at 122–142 (EGEDDEDDEEEEDEEEEEEEA) shows a compositional bias: acidic residues.

Belongs to the nucleosome assembly protein (NAP) family.

The protein resides in the nucleus. The protein is Nucleosome assembly protein 1-like 5 (Nap1l5) of Rattus norvegicus (Rat).